Consider the following 760-residue polypeptide: Sphingosine kinase B (760 aa).

The segment at 1 to 108 (MENNNNEPAE…NNNNNEPVTS (108 aa)) is disordered. The span at 12–39 (VQEKGPKLKNDIDLNDQFKDEKEKKEEI) shows a compositional bias: basic and acidic residues. Residues 40–106 (SSSSIENKNN…NNNNNNNEPV (67 aa)) show a composition bias toward low complexity. A DAGKc domain is found at 247-383 (PKNRKIRILI…LDVCIVQQPT (137 aa)). Residues 257–259 (NPK) and threonine 288 contribute to the ATP site. 313 to 316 (SGDG) serves as a coordination point for substrate. Aspartate 315 acts as the Proton donor/acceptor in catalysis. Residues glutamate 320 and 345-347 (GTG) each bind ATP. The disordered stretch occupies residues 394–438 (TVTTTTTTTSPTSASPTITSANNNNNNNNNNNNNNNNNNNNNNNN). Aspartate 461 contacts substrate. The ATP site is built by arginine 468 and arginine 474. The interval 535–605 (DNDNNNKNKN…SSPRSDINMS (71 aa)) is disordered. The segment covering 549-597 (EINSTTSNNNNNNNTTTTSTSSSTSTSTSTSSLTATTTTAKSTNSLSSS) has biased composition (low complexity). Residue 734–736 (DGE) coordinates ATP.

The enzyme catalyses a sphingoid base + ATP = a sphingoid 1-phosphate + ADP + H(+). Its activity is regulated as follows. Inhibited by N,N,-dimethylsphingosine. In terms of biological role, catalyzes the phosphorylation of sphingosine to form sphingosine-1-phosphate (S1P), which probably acts intracellularly as a second messenger perhaps by promoting cell proliferation. The protein is Sphingosine kinase B (sgkB) of Dictyostelium discoideum (Social amoeba).